Consider the following 404-residue polypeptide: MAAATTSRRGPGAMDDENLTFETSPGVEVISSFDQMGIREDLLRGIYAYGFEKPSAIQQRAVLPIISGRDVIAQAQSGTGKTSMISLSVCQIVDTAVREVQALILSPTRELAAQTERVMLAIGDYINIQVHACIGGKSIGEDIRKLEHGVHVVSGTPGRVCDMIKRRTLRTRAIKLLILDEADEMLGRGFKDQIYDVYRYLPPELQVCLISATLPHEILEMTSKFMTDPVRILVKRDELTLEGIKQFFVAVEKEEWKFDTLCDLYDTLTITQAVIFCNTKRKVDWLTERMRSNNFTVSAMHGDMPQKERDAIMGEFRSGATRVLITTDVWARGLDVQQVSLVINYDLPNNRELYIHRIGRSGRFGRKGVAINFVKKEDIRILRDIEQYYSTQIDEMPMNVADLI.

Residues 1–21 (MAAATTSRRGPGAMDDENLTF) form a disordered region. The Q motif signature appears at 31 to 59 (SSFDQMGIREDLLRGIYAYGFEKPSAIQQ). One can recognise a Helicase ATP-binding domain in the interval 62-232 (VLPIISGRDV…SKFMTDPVRI (171 aa)). 75 to 82 (AQSGTGKT) contributes to the ATP binding site. Positions 180 to 183 (DEAD) match the DEAD box motif. The region spanning 243-404 (GIKQFFVAVE…EMPMNVADLI (162 aa)) is the Helicase C-terminal domain.

This sequence belongs to the DEAD box helicase family. DDX48/FAL1 subfamily. In terms of assembly, interacts with MAGO1 and Y14B. In terms of tissue distribution, expressed in leaves, flowers and seeds.

It is found in the nucleus. It localises to the cytoplasm. The enzyme catalyses ATP + H2O = ADP + phosphate + H(+). Its function is as follows. ATP-dependent RNA helicase. Core component of the splicing-dependent multiprotein exon junction complex (EJC) deposited at splice junctions on mRNAs. The EJC is a dynamic structure consisting of core proteins and several peripheral nuclear and cytoplasmic associated factors that join the complex only transiently either during EJC assembly or during subsequent mRNA metabolism. The EJC marks the position of the exon-exon junction in the mature mRNA for the gene expression machinery and the core components remain bound to spliced mRNAs throughout all stages of mRNA metabolism thereby influencing downstream processes including nuclear mRNA export, subcellular mRNA localization, translation efficiency and nonsense-mediated mRNA decay (NMD). Its RNA-dependent ATPase and RNA-helicase activities are induced by MLN51/CASC3, but abolished in presence of the MAGO-Y14 heterodimer, thereby trapping the ATP-bound EJC core onto spliced mRNA in a stable conformation. The inhibition of ATPase activity by the MAGO-Y14 heterodimer increases the RNA-binding affinity of the EJC. EJC core proteins play essential roles in rice development, growth and reproduction. Regulates the splicing of UDT1 (UNDEVELOPED TAPETUM 1) pre-mRNA transcript. UDT1 is a key regulator in stamen development. In Oryza sativa subsp. japonica (Rice), this protein is Eukaryotic initiation factor 4A-III homolog B.